Consider the following 120-residue polypeptide: Large ribosomal subunit protein uL18 (120 aa).

This sequence belongs to the universal ribosomal protein uL18 family. As to quaternary structure, part of the 50S ribosomal subunit; part of the 5S rRNA/L5/L18/L25 subcomplex. Contacts the 5S and 23S rRNAs.

Its function is as follows. This is one of the proteins that bind and probably mediate the attachment of the 5S RNA into the large ribosomal subunit, where it forms part of the central protuberance. The sequence is that of Large ribosomal subunit protein uL18 from Methylobacterium radiotolerans (strain ATCC 27329 / DSM 1819 / JCM 2831 / NBRC 15690 / NCIMB 10815 / 0-1).